The chain runs to 160 residues: MRCPNCNSLDTQVKDSRPTEDSSVIRRRRVCIACNFRFTTFERVQLRELTVIKRNGRRVPFDRDKLVRSVQISLRKRPVEPERVEQLVSAIVRELESSGEADISSETIGEIVMDHLRKLDDVAYVRFASVYRNFREAKDFEAVLGELSGEEEARPTLVRK.

Over residues 1 to 11 (MRCPNCNSLDT) the composition is skewed to polar residues. The disordered stretch occupies residues 1–20 (MRCPNCNSLDTQVKDSRPTE). A zinc finger spans residues 3 to 34 (CPNCNSLDTQVKDSRPTEDSSVIRRRRVCIAC). An ATP-cone domain is found at 49-139 (LTVIKRNGRR…VYRNFREAKD (91 aa)).

It belongs to the NrdR family. Zn(2+) serves as cofactor.

In terms of biological role, negatively regulates transcription of bacterial ribonucleotide reductase nrd genes and operons by binding to NrdR-boxes. The protein is Transcriptional repressor NrdR of Rhodopseudomonas palustris (strain BisB5).